Consider the following 208-residue polypeptide: Small ribosomal subunit protein uS2 (208 aa).

The interval 189-208 (KPDQDLPVPPEEFETKLVQS) is disordered.

It belongs to the universal ribosomal protein uS2 family.

The sequence is that of Small ribosomal subunit protein uS2 (rps2) from Pyrobaculum aerophilum (strain ATCC 51768 / DSM 7523 / JCM 9630 / CIP 104966 / NBRC 100827 / IM2).